The following is a 496-amino-acid chain: UDP-glycosyltransferase 73C4 (496 aa).

UDP-alpha-D-glucose is bound by residues S297, 357–359 (SPQ), 374–382 (HCGWNSTLE), and 396–399 (FGDQ). The tract at residues 450–475 (SDDAKERRRRVKELGESAHKAVEEGG) is disordered. A compositionally biased stretch (basic and acidic residues) spans 451 to 472 (DDAKERRRRVKELGESAHKAVE).

The protein belongs to the UDP-glycosyltransferase family.

The protein is UDP-glycosyltransferase 73C4 (UGT73C4) of Arabidopsis thaliana (Mouse-ear cress).